The sequence spans 450 residues: Protein W (450 aa).

Residues Ser53–Val92 form a disordered region. Residues Met63 to Glu76 are compositionally biased toward basic and acidic residues. Ser257 is modified (phosphoserine; by host). The tract at residues Ile265–Arg324 is disordered. A Phosphoserine; by host modification is found at Ser350. 2 disordered regions span residues Val384 to Pro403 and Pro429 to Asn450. Over residues Thr438 to Asn450 the composition is skewed to basic residues. The Nuclear localization signal motif lies at Lys439–Arg442.

As to quaternary structure, interacts with host STAT1.

It localises to the host nucleus. In terms of biological role, prevent the establishment of cellular antiviral state by blocking the interferon-alpha/beta (IFN-alpha/beta). Interacts with host STAT1 protein in the nucleus, blocking it's phosphorylation by IFN-alpha/beta. Also blocks antiviral state induced by Toll-like receptor 3/TLR3 binding to dsRNA. The polypeptide is Protein W (P/V/C) (Cynopterus brachyotis (Lesser short-nosed fruit bat)).